The primary structure comprises 180 residues: MNTLQKGFTLIELMIVIAIVGILAAVALPAYQDYTARAQVSEAILLAEGQKSAVTEYYLNHGKWPENNTSAGVASPPSDIKGKYVKEVKVENGVVTATMNSSGVNKEIQGKRLSLWGRRENGSVKWFCGQPVTRAKADADADAAGKDTTNIDTKHLPSTCRDAASAVCIETPPTAFYKNT.

Positions 1-7 (MNTLQKG) are excised as a propeptide. An N-methylphenylalanine modification is found at phenylalanine 8. The helical transmembrane segment at 8 to 28 (FTLIELMIVIAIVGILAAVAL) threads the bilayer. The O-linked (GlcNAc...) serine glycan is linked to serine 70. A disulfide bridge connects residues cysteine 128 and cysteine 160.

It belongs to the N-Me-Phe pilin family. The pili are polar flexible filaments of about 5.4 nanometers diameter and 2.5 micrometers average length; they consist of only a single polypeptide chain arranged in a helical configuration of five subunits per turn in the assembled pilus.

Its subcellular location is the fimbrium. It localises to the membrane. Functionally, major component of the type IV pilus (T4P) that plays a role in cellular adherence, microcolony formation, resistance to neutrophil mediated killing, twitching motility as well as transformation. Mediates the attachment and the formation of bacterial microcolonies on host epithelial cells. Mechanistically, pili retractation induces host NF-kappa-B activation in infected cells, which is temporally associated with the formation of gonococcal microcolonies. This chain is Type IV major pilin protein PilE1 (pilE1), found in Neisseria gonorrhoeae.